The sequence spans 275 residues: NH(3)-dependent NAD(+) synthetase (275 aa).

43 to 50 is an ATP binding site; that stretch reads GISGGVDS. Aspartate 49 contributes to the Mg(2+) binding site. Arginine 145 contacts deamido-NAD(+). Threonine 165 provides a ligand contact to ATP. Glutamate 170 contributes to the Mg(2+) binding site. Residues lysine 178 and aspartate 185 each contribute to the deamido-NAD(+) site. Lysine 194 and threonine 216 together coordinate ATP. Residue 265–266 coordinates deamido-NAD(+); that stretch reads HK.

The protein belongs to the NAD synthetase family. In terms of assembly, homodimer.

It carries out the reaction deamido-NAD(+) + NH4(+) + ATP = AMP + diphosphate + NAD(+) + H(+). Its pathway is cofactor biosynthesis; NAD(+) biosynthesis; NAD(+) from deamido-NAD(+) (ammonia route): step 1/1. Catalyzes the ATP-dependent amidation of deamido-NAD to form NAD. Uses ammonia as a nitrogen source. The chain is NH(3)-dependent NAD(+) synthetase from Shewanella denitrificans (strain OS217 / ATCC BAA-1090 / DSM 15013).